The following is a 159-amino-acid chain: Voltage-dependent N-type calcium channel subunit alpha-1B (159 aa).

The helical transmembrane segment at 1 to 5 threads the bilayer; that stretch reads LVTEI. One copy of the IV repeat lies at 1-159; the sequence is LVTEIADTDN…LMLNLFVAVI (159 aa). Residues 6–13 lie on the Extracellular side of the membrane; that stretch reads ADTDNFIN. N13 is a glycosylation site (N-linked (GlcNAc...) asparagine). A helical membrane pass occupies residues 14–32; the sequence is LSFLRLFRAARLIKLLRQG. Residues 33–51 are Cytoplasmic-facing; the sequence is YTIRILLWTFVQSFKALPY. Residues 52–71 form a helical membrane-spanning segment; the sequence is VCLLIAMLFFIYAIIGMQVF. The Extracellular segment spans residues 72–135; that stretch reads GNIALNDETS…LTKNECGSDF (64 aa). The helical transmembrane segment at 136-155 threads the bilayer; it reads AYFYFVSFIFLCSFLMLNLF. At 156–159 the chain is on the cytoplasmic side; the sequence is VAVI.

It belongs to the calcium channel alpha-1 subunit (TC 1.A.1.11) family. CACNA1B subfamily. As to quaternary structure, multisubunit complex consisting of alpha-1, alpha-2, beta and delta subunits in a 1:1:1:1 ratio. The channel activity is directed by the pore-forming and voltage-sensitive alpha-1 subunit. In many cases, this subunit is sufficient to generate voltage-sensitive calcium channel activity. The auxiliary subunits beta and alpha-2/delta linked by a disulfide bridge regulate the channel activity. Interacts with RIMBP2. Phosphorylated in vitro by CaM-kinase II, PKA, PKC and CGPK.

Its subcellular location is the membrane. The catalysed reaction is Ca(2+)(in) = Ca(2+)(out). In terms of biological role, voltage-sensitive calcium channels (VSCC) mediate the entry of calcium ions into excitable cells and are also involved in a variety of calcium-dependent processes, including muscle contraction, hormone or neurotransmitter release, gene expression, cell motility, cell division and cell death. This alpha-1B subunit gives rise to N-type calcium currents. N-type calcium channels belong to the 'high-voltage activated' (HVA) group. They are involved in pain signaling. Calcium channels containing alpha-1B subunit may play a role in directed migration of immature neurons. Mediates Ca(2+) release probability at hippocampal neuronal soma and synaptic terminals. This is Voltage-dependent N-type calcium channel subunit alpha-1B (CACNA1B) from Gallus gallus (Chicken).